Reading from the N-terminus, the 75-residue chain is Large ribosomal subunit protein bL31c (75 aa).

This sequence belongs to the bacterial ribosomal protein bL31 family. Type A subfamily. Part of the 50S ribosomal subunit.

The protein localises to the plastid. The protein resides in the chloroplast. Functionally, binds the 23S rRNA. The polypeptide is Large ribosomal subunit protein bL31c (Cyanidium caldarium (Red alga)).